Reading from the N-terminus, the 901-residue chain is Protein translocase subunit SecA (901 aa).

Residues glutamine 89, 107–111, and aspartate 502 contribute to the ATP site; that span reads GEGKT. Residues cysteine 884, cysteine 886, cysteine 895, and histidine 896 each coordinate Zn(2+).

The protein belongs to the SecA family. Monomer and homodimer. Part of the essential Sec protein translocation apparatus which comprises SecA, SecYEG and auxiliary proteins SecDF-YajC and YidC. It depends on Zn(2+) as a cofactor.

Its subcellular location is the cell inner membrane. It localises to the cytoplasm. It carries out the reaction ATP + H2O + cellular proteinSide 1 = ADP + phosphate + cellular proteinSide 2.. Functionally, part of the Sec protein translocase complex. Interacts with the SecYEG preprotein conducting channel. Has a central role in coupling the hydrolysis of ATP to the transfer of proteins into and across the cell membrane, serving both as a receptor for the preprotein-SecB complex and as an ATP-driven molecular motor driving the stepwise translocation of polypeptide chains across the membrane. This chain is Protein translocase subunit SecA, found in Sinorhizobium fredii (strain NBRC 101917 / NGR234).